The primary structure comprises 405 residues: Argininosuccinate synthase (405 aa).

8 to 16 (AYSGGLDTS) contacts ATP. 2 residues coordinate L-citrulline: Y86 and S91. G116 lines the ATP pocket. T118, N122, and D123 together coordinate L-aspartate. Residue N122 participates in L-citrulline binding. 5 residues coordinate L-citrulline: R126, S175, S184, E260, and Y272.

The protein belongs to the argininosuccinate synthase family. Type 1 subfamily. In terms of assembly, homotetramer.

Its subcellular location is the cytoplasm. The catalysed reaction is L-citrulline + L-aspartate + ATP = 2-(N(omega)-L-arginino)succinate + AMP + diphosphate + H(+). The protein operates within amino-acid biosynthesis; L-arginine biosynthesis; L-arginine from L-ornithine and carbamoyl phosphate: step 2/3. The chain is Argininosuccinate synthase from Koribacter versatilis (strain Ellin345).